A 215-amino-acid chain; its full sequence is 3-demethoxyubiquinol 3-hydroxylase (215 aa).

Fe cation is bound by residues glutamate 64, glutamate 94, histidine 97, glutamate 146, glutamate 178, and histidine 181.

It belongs to the COQ7 family. It depends on Fe cation as a cofactor.

Its subcellular location is the cell membrane. It catalyses the reaction a 5-methoxy-2-methyl-3-(all-trans-polyprenyl)benzene-1,4-diol + AH2 + O2 = a 3-demethylubiquinol + A + H2O. Its pathway is cofactor biosynthesis; ubiquinone biosynthesis. Functionally, catalyzes the hydroxylation of 2-nonaprenyl-3-methyl-6-methoxy-1,4-benzoquinol during ubiquinone biosynthesis. The sequence is that of 3-demethoxyubiquinol 3-hydroxylase from Pseudomonas fluorescens (strain Pf0-1).